The following is a 374-amino-acid chain: SKP1-interacting partner 15 (374 aa).

The region spanning 3–48 (SSPVNCLPPDSLHQIFSSLPIRDIMICRSVCKFFNQLLTSQCFIEI) is the F-box domain.

As to quaternary structure, part of a SCF (ASK-cullin-F-box) protein ligase complex. Interacts with SKP1A/ASK1, SKP1B/ASK2, ASK11 and ASK13.

It is found in the nucleus. It participates in protein modification; protein ubiquitination. In terms of biological role, component of SCF(ASK-cullin-F-box) E3 ubiquitin ligase complexes, which may mediate the ubiquitination and subsequent proteasomal degradation of target proteins. The sequence is that of SKP1-interacting partner 15 (SKIP15) from Arabidopsis thaliana (Mouse-ear cress).